The primary structure comprises 456 residues: Adenylosuccinate lyase (456 aa).

N(6)-(1,2-dicarboxyethyl)-AMP-binding positions include 15–16, 90–92, and 122–123; these read RY, NHD, and TS. The Proton donor/acceptor role is filled by His171. Gln248 provides a ligand contact to N(6)-(1,2-dicarboxyethyl)-AMP. Residue Ser296 is the Proton donor/acceptor of the active site. N(6)-(1,2-dicarboxyethyl)-AMP-binding positions include Ser297, 302 to 304, Asn310, Arg336, and 341 to 345; these read KVN and STVLR.

This sequence belongs to the lyase 1 family. Adenylosuccinate lyase subfamily. Homotetramer. Residues from neighboring subunits contribute catalytic and substrate-binding residues to each active site.

The enzyme catalyses N(6)-(1,2-dicarboxyethyl)-AMP = fumarate + AMP. The catalysed reaction is (2S)-2-[5-amino-1-(5-phospho-beta-D-ribosyl)imidazole-4-carboxamido]succinate = 5-amino-1-(5-phospho-beta-D-ribosyl)imidazole-4-carboxamide + fumarate. It participates in purine metabolism; AMP biosynthesis via de novo pathway; AMP from IMP: step 2/2. It functions in the pathway purine metabolism; IMP biosynthesis via de novo pathway; 5-amino-1-(5-phospho-D-ribosyl)imidazole-4-carboxamide from 5-amino-1-(5-phospho-D-ribosyl)imidazole-4-carboxylate: step 2/2. In terms of biological role, catalyzes two reactions in de novo purine nucleotide biosynthesis. Catalyzes the breakdown of 5-aminoimidazole- (N-succinylocarboxamide) ribotide (SAICAR or 2-[5-amino-1-(5-phospho-beta-D-ribosyl)imidazole-4-carboxamido]succinate) to 5-aminoimidazole-4-carboxamide ribotide (AICAR or 5-amino-1-(5-phospho-beta-D-ribosyl)imidazole-4-carboxamide) and fumarate, and of adenylosuccinate (ADS or N(6)-(1,2-dicarboxyethyl)-AMP) to adenosine monophosphate (AMP) and fumarate. This chain is Adenylosuccinate lyase (purB), found in Pseudomonas aeruginosa (strain ATCC 15692 / DSM 22644 / CIP 104116 / JCM 14847 / LMG 12228 / 1C / PRS 101 / PAO1).